The chain runs to 89 residues: Small ribosomal subunit protein uS14 (89 aa).

Belongs to the universal ribosomal protein uS14 family. In terms of assembly, part of the 30S ribosomal subunit. Contacts proteins S3 and S10.

Binds 16S rRNA, required for the assembly of 30S particles and may also be responsible for determining the conformation of the 16S rRNA at the A site. The protein is Small ribosomal subunit protein uS14 of Flavobacterium johnsoniae (strain ATCC 17061 / DSM 2064 / JCM 8514 / BCRC 14874 / CCUG 350202 / NBRC 14942 / NCIMB 11054 / UW101) (Cytophaga johnsonae).